A 565-amino-acid polypeptide reads, in one-letter code: Sulfite reductase [NADPH] hemoprotein beta-component (565 aa).

[4Fe-4S] cluster contacts are provided by Cys429, Cys435, Cys474, and Cys478. A siroheme-binding site is contributed by Cys478.

The protein belongs to the nitrite and sulfite reductase 4Fe-4S domain family. As to quaternary structure, alpha(8)-beta(8). The alpha component is a flavoprotein, the beta component is a hemoprotein. It depends on siroheme as a cofactor. The cofactor is [4Fe-4S] cluster.

The catalysed reaction is hydrogen sulfide + 3 NADP(+) + 3 H2O = sulfite + 3 NADPH + 4 H(+). It functions in the pathway sulfur metabolism; hydrogen sulfide biosynthesis; hydrogen sulfide from sulfite (NADPH route): step 1/1. In terms of biological role, component of the sulfite reductase complex that catalyzes the 6-electron reduction of sulfite to sulfide. This is one of several activities required for the biosynthesis of L-cysteine from sulfate. The chain is Sulfite reductase [NADPH] hemoprotein beta-component from Shewanella baltica (strain OS155 / ATCC BAA-1091).